A 322-amino-acid chain; its full sequence is Eukaryotic translation initiation factor 3 subunit I (322 aa).

5 WD repeats span residues G4–T43, G46–S85, M141–D180, D184–T223, and G281–E322.

It belongs to the eIF-3 subunit I family. As to quaternary structure, component of the eukaryotic translation initiation factor 3 (eIF-3) complex. The eIF-3 complex interacts with pix.

The protein localises to the cytoplasm. Component of the eukaryotic translation initiation factor 3 (eIF-3) complex, which is involved in protein synthesis of a specialized repertoire of mRNAs and, together with other initiation factors, stimulates binding of mRNA and methionyl-tRNAi to the 40S ribosome. The eIF-3 complex specifically targets and initiates translation of a subset of mRNAs involved in cell proliferation. This Drosophila willistoni (Fruit fly) protein is Eukaryotic translation initiation factor 3 subunit I.